Reading from the N-terminus, the 239-residue chain is Hexuronic acid methyltransferase AglP (239 aa).

Belongs to the FkbM methyltransferase family.

The protein resides in the cytoplasm. It participates in cell surface structure biogenesis; S-layer biogenesis. Involved in the assembly of a N-linked pentasaccharide that decorates the S-layer glycoprotein and flagellins. S-adenosyl-L-methionine-dependent methyltransferase that modifies the hexuronic acid found at position 4 of the pentasaccharide. The polypeptide is Hexuronic acid methyltransferase AglP (aglP) (Haloferax volcanii (strain ATCC 29605 / DSM 3757 / JCM 8879 / NBRC 14742 / NCIMB 2012 / VKM B-1768 / DS2) (Halobacterium volcanii)).